A 162-amino-acid chain; its full sequence is Ribosome maturation factor RimP (162 aa).

The protein belongs to the RimP family.

It is found in the cytoplasm. In terms of biological role, required for maturation of 30S ribosomal subunits. In Leptospira interrogans serogroup Icterohaemorrhagiae serovar copenhageni (strain Fiocruz L1-130), this protein is Ribosome maturation factor RimP.